The sequence spans 161 residues: Allophycocyanin beta chain (161 aa).

Asn71 bears the N4-methylasparagine mark. Cys81 provides a ligand contact to (2R,3E)-phycocyanobilin.

Belongs to the phycobiliprotein family. Heterodimer of an alpha and a beta chain. Post-translationally, contains one covalently linked phycocyanobilin chromophore.

The protein localises to the plastid. Its subcellular location is the chloroplast thylakoid membrane. Light-harvesting photosynthetic bile pigment-protein from the phycobiliprotein complex. Allophycocyanin has a maximum absorption at approximately 650 nanometers. The protein is Allophycocyanin beta chain (apcB) of Aglaothamnion neglectum (Red alga).